A 480-amino-acid chain; its full sequence is MKAEALFDLDPGVKVRTRFAPSPTGYLHVGGARTALYSWLYAKHHQGEFVLRIEDTDLERSTPEATAAILEGMAWLNLAWEHGPYFQTKRFDRYNQVIDQMIEQGLAYRCYCSKERLEDLRNTQEQNKQKPRYDRHCLGDHKHSPEQPHVVRFKNPTEGSVVFEDAVRGRIEISNAELDDLIIRRTDGSPTYNFCVVVDDWDMGITHVVRGEDHINNTPRQINILKALGAPIPTYAHVSMILGDDGQKLSKRHGAVSVMQYRDDGYLPEALLNYLVRLGWGHGDQEIFSVEEMIKLFELESVSKSASAFNTEKLLWLNHHYIRELPAEYVAKHLAWHYQDQGIDTSNGPALEDIVKMLAERCKTLKEMAAASRYFFEDFDSFDEAAVKKHFKVAAIEPLEKVKEKLTALDSWDLHSTHQAIEQTAAELELGMGKVGMPLRVAVTGSGQSPSMDVTLVGIGKARTLVRIQKAIDFIKSQNV.

Residues 21-31 carry the 'HIGH' region motif; it reads PSPTGYLHVGG. The segment covering 122–146 has biased composition (basic and acidic residues); it reads NTQEQNKQKPRYDRHCLGDHKHSPE. Residues 122 to 149 are disordered; the sequence is NTQEQNKQKPRYDRHCLGDHKHSPEQPH. A 'KMSKS' region motif is present at residues 248 to 252; that stretch reads KLSKR. Lysine 251 provides a ligand contact to ATP.

It belongs to the class-I aminoacyl-tRNA synthetase family. Glutamate--tRNA ligase type 1 subfamily. In terms of assembly, monomer.

It is found in the cytoplasm. The enzyme catalyses tRNA(Glu) + L-glutamate + ATP = L-glutamyl-tRNA(Glu) + AMP + diphosphate. Functionally, catalyzes the attachment of glutamate to tRNA(Glu) in a two-step reaction: glutamate is first activated by ATP to form Glu-AMP and then transferred to the acceptor end of tRNA(Glu). The sequence is that of Glutamate--tRNA ligase from Pasteurella multocida (strain Pm70).